The sequence spans 153 residues: Ribosome-binding factor A (153 aa).

Residues 116–153 (DAQVAEQAQGAQYAAGEDAYRTPSDEDDAEGPESAPRV) are disordered. Residues 119–132 (VAEQAQGAQYAAGE) show a composition bias toward low complexity.

It belongs to the RbfA family. Monomer. Binds 30S ribosomal subunits, but not 50S ribosomal subunits or 70S ribosomes.

Its subcellular location is the cytoplasm. In terms of biological role, one of several proteins that assist in the late maturation steps of the functional core of the 30S ribosomal subunit. Associates with free 30S ribosomal subunits (but not with 30S subunits that are part of 70S ribosomes or polysomes). Required for efficient processing of 16S rRNA. May interact with the 5'-terminal helix region of 16S rRNA. This is Ribosome-binding factor A from Kocuria rhizophila (strain ATCC 9341 / DSM 348 / NBRC 103217 / DC2201).